A 279-amino-acid polypeptide reads, in one-letter code: Tryptophan synthase alpha chain (279 aa).

Active-site proton acceptor residues include glutamate 63 and aspartate 74.

This sequence belongs to the TrpA family. Tetramer of two alpha and two beta chains.

It carries out the reaction (1S,2R)-1-C-(indol-3-yl)glycerol 3-phosphate + L-serine = D-glyceraldehyde 3-phosphate + L-tryptophan + H2O. The protein operates within amino-acid biosynthesis; L-tryptophan biosynthesis; L-tryptophan from chorismate: step 5/5. In terms of biological role, the alpha subunit is responsible for the aldol cleavage of indoleglycerol phosphate to indole and glyceraldehyde 3-phosphate. In Prochlorococcus marinus subsp. pastoris (strain CCMP1986 / NIES-2087 / MED4), this protein is Tryptophan synthase alpha chain.